Consider the following 208-residue polypeptide: Uracil phosphoribosyltransferase (208 aa).

Residues Arg78, Arg103, and Asp130–Thr138 contribute to the 5-phospho-alpha-D-ribose 1-diphosphate site. Uracil-binding positions include Ile193 and Gly198 to Ala200. A 5-phospho-alpha-D-ribose 1-diphosphate-binding site is contributed by Asp199.

The protein belongs to the UPRTase family. It depends on Mg(2+) as a cofactor.

It catalyses the reaction UMP + diphosphate = 5-phospho-alpha-D-ribose 1-diphosphate + uracil. The protein operates within pyrimidine metabolism; UMP biosynthesis via salvage pathway; UMP from uracil: step 1/1. Its activity is regulated as follows. Allosterically activated by GTP. Its function is as follows. Catalyzes the conversion of uracil and 5-phospho-alpha-D-ribose 1-diphosphate (PRPP) to UMP and diphosphate. In Blochmanniella floridana, this protein is Uracil phosphoribosyltransferase.